A 379-amino-acid chain; its full sequence is Elongation factor Ts, mitochondrial (379 aa).

The transit peptide at 1–45 (MALYRTARRPLQMMLFSRLGNPEQNYSSWARKDASQSAFGMFVRL) directs the protein to the mitochondrion.

Belongs to the EF-Ts family.

It is found in the mitochondrion. Associates with the EF-Tu.GDP complex and induces the exchange of GDP to GTP. It remains bound to the aminoacyl-tRNA.EF-Tu.GTP complex up to the GTP hydrolysis stage on the ribosome. The polypeptide is Elongation factor Ts, mitochondrial (Ricinus communis (Castor bean)).